A 365-amino-acid polypeptide reads, in one-letter code: Peptide chain release factor 2 (365 aa).

Glutamine 252 carries the N5-methylglutamine modification.

It belongs to the prokaryotic/mitochondrial release factor family. Post-translationally, methylated by PrmC. Methylation increases the termination efficiency of RF2.

Its subcellular location is the cytoplasm. Peptide chain release factor 2 directs the termination of translation in response to the peptide chain termination codons UGA and UAA. The chain is Peptide chain release factor 2 from Tolumonas auensis (strain DSM 9187 / NBRC 110442 / TA 4).